Consider the following 495-residue polypeptide: Trimethylamine methyltransferase MttB2 (495 aa).

A non-standard amino acid (pyrrolysine) is located at residue Pyl-334.

It belongs to the trimethylamine methyltransferase family. In terms of assembly, can form a complex with MttC.

It carries out the reaction Co(I)-[trimethylamine-specific corrinoid protein] + trimethylamine + H(+) = methyl-Co(III)-[trimethylamine-specific corrinoid protein] + dimethylamine. It functions in the pathway one-carbon metabolism; methanogenesis from trimethylamine. Functionally, catalyzes the transfer of a methyl group from trimethylamine to the corrinoid cofactor of MttC. This chain is Trimethylamine methyltransferase MttB2 (mttB2), found in Methanosarcina mazei (strain ATCC BAA-159 / DSM 3647 / Goe1 / Go1 / JCM 11833 / OCM 88) (Methanosarcina frisia).